The chain runs to 930 residues: Dual serine/threonine and tyrosine protein kinase (930 aa).

The stretch at 383-428 (RKENELYESLMNIANRKQEEMKDMIIETLSNMKEELLEDAANMEFK) forms a coiled coil. The 255-residue stretch at 653 to 907 (PKLGRELGRG…PLLGIVQPML (255 aa)) folds into the Protein kinase domain. Residues 659 to 667 (LGRGQYGVV) and Lys-682 each bind ATP. Residue Asp-778 is the Proton acceptor of the active site.

This sequence belongs to the protein kinase superfamily. Ser/Thr protein kinase family. In terms of tissue distribution, widely expressed with the highest expression in brain and ovary.

The protein localises to the cytoplasm. The protein resides in the cell membrane. It is found in the apical cell membrane. Its subcellular location is the basolateral cell membrane. It localises to the cell junction. It catalyses the reaction L-seryl-[protein] + ATP = O-phospho-L-seryl-[protein] + ADP + H(+). The enzyme catalyses L-threonyl-[protein] + ATP = O-phospho-L-threonyl-[protein] + ADP + H(+). It carries out the reaction L-tyrosyl-[protein] + ATP = O-phospho-L-tyrosyl-[protein] + ADP + H(+). May act as a positive regulator of ERK phosphorylation downstream of fibroblast growth factor-receptor activation. May induce both caspase-dependent apoptosis and caspase-independent cell death. The protein is Dual serine/threonine and tyrosine protein kinase (DSTYK) of Gallus gallus (Chicken).